Reading from the N-terminus, the 151-residue chain is MLP-like protein 328 (151 aa).

It belongs to the MLP family.

In Arabidopsis thaliana (Mouse-ear cress), this protein is MLP-like protein 328 (MLP328).